Here is a 191-residue protein sequence, read N- to C-terminus: Protein GrpE (191 aa).

This sequence belongs to the GrpE family. As to quaternary structure, homodimer.

It is found in the cytoplasm. Its function is as follows. Participates actively in the response to hyperosmotic and heat shock by preventing the aggregation of stress-denatured proteins, in association with DnaK and GrpE. It is the nucleotide exchange factor for DnaK and may function as a thermosensor. Unfolded proteins bind initially to DnaJ; upon interaction with the DnaJ-bound protein, DnaK hydrolyzes its bound ATP, resulting in the formation of a stable complex. GrpE releases ADP from DnaK; ATP binding to DnaK triggers the release of the substrate protein, thus completing the reaction cycle. Several rounds of ATP-dependent interactions between DnaJ, DnaK and GrpE are required for fully efficient folding. The sequence is that of Protein GrpE from Nitratidesulfovibrio vulgaris (strain ATCC 29579 / DSM 644 / CCUG 34227 / NCIMB 8303 / VKM B-1760 / Hildenborough) (Desulfovibrio vulgaris).